The following is an 813-amino-acid chain: Phenylalanine--tRNA ligase beta subunit (813 aa).

Positions 42-151 (AKDFNHVVIG…ADAPVGKAYA (110 aa)) constitute a tRNA-binding domain. Residues 405–480 (VKKAPVDITI…RLNGYEHIPE (76 aa)) form the B5 domain. 4 residues coordinate Mg(2+): D458, D464, E467, and E468. In terms of domain architecture, FDX-ACB spans 720-813 (SKFPIVERDF…LKKNFDLSVR (94 aa)).

This sequence belongs to the phenylalanyl-tRNA synthetase beta subunit family. Type 1 subfamily. Tetramer of two alpha and two beta subunits. Requires Mg(2+) as cofactor.

The protein resides in the cytoplasm. The enzyme catalyses tRNA(Phe) + L-phenylalanine + ATP = L-phenylalanyl-tRNA(Phe) + AMP + diphosphate + H(+). In Bdellovibrio bacteriovorus (strain ATCC 15356 / DSM 50701 / NCIMB 9529 / HD100), this protein is Phenylalanine--tRNA ligase beta subunit.